A 131-amino-acid polypeptide reads, in one-letter code: Large ribosomal subunit protein bL19 (131 aa).

The protein belongs to the bacterial ribosomal protein bL19 family.

This protein is located at the 30S-50S ribosomal subunit interface and may play a role in the structure and function of the aminoacyl-tRNA binding site. This Synechococcus sp. (strain CC9902) protein is Large ribosomal subunit protein bL19.